Here is a 687-residue protein sequence, read N- to C-terminus: DNA-directed RNA polymerase subunit beta' (687 aa).

Residues C76, C78, C94, and C97 each contribute to the Zn(2+) site. Mg(2+)-binding residues include D496, D498, and D500.

Belongs to the RNA polymerase beta' chain family. RpoC1 subfamily. In terms of assembly, in plastids the minimal PEP RNA polymerase catalytic core is composed of four subunits: alpha, beta, beta', and beta''. When a (nuclear-encoded) sigma factor is associated with the core the holoenzyme is formed, which can initiate transcription. The cofactor is Mg(2+). Zn(2+) serves as cofactor.

The protein localises to the plastid. It is found in the chloroplast. It carries out the reaction RNA(n) + a ribonucleoside 5'-triphosphate = RNA(n+1) + diphosphate. Functionally, DNA-dependent RNA polymerase catalyzes the transcription of DNA into RNA using the four ribonucleoside triphosphates as substrates. The sequence is that of DNA-directed RNA polymerase subunit beta' from Ipomoea purpurea (Common morning glory).